The primary structure comprises 250 residues: Ribosomal RNA small subunit methyltransferase J (250 aa).

Residues 101 to 102, 117 to 118, 153 to 154, and Asp-171 each bind S-adenosyl-L-methionine; these read RD, ER, and SS.

It belongs to the methyltransferase superfamily. RsmJ family.

Its subcellular location is the cytoplasm. It catalyses the reaction guanosine(1516) in 16S rRNA + S-adenosyl-L-methionine = N(2)-methylguanosine(1516) in 16S rRNA + S-adenosyl-L-homocysteine + H(+). Its function is as follows. Specifically methylates the guanosine in position 1516 of 16S rRNA. The sequence is that of Ribosomal RNA small subunit methyltransferase J from Escherichia coli (strain UTI89 / UPEC).